The primary structure comprises 365 residues: Flagellar P-ring protein (365 aa).

The first 19 residues, 1-19, serve as a signal peptide directing secretion; it reads MFKALAGIVLALVATLAHA.

This sequence belongs to the FlgI family. As to quaternary structure, the basal body constitutes a major portion of the flagellar organelle and consists of four rings (L,P,S, and M) mounted on a central rod.

It is found in the periplasm. Its subcellular location is the bacterial flagellum basal body. Its function is as follows. Assembles around the rod to form the L-ring and probably protects the motor/basal body from shearing forces during rotation. The polypeptide is Flagellar P-ring protein (Salmonella heidelberg (strain SL476)).